We begin with the raw amino-acid sequence, 425 residues long: uncharacterized protein (425 aa).

This is an uncharacterized protein from Acidianus sp. F28 (AFV-2).